A 134-amino-acid polypeptide reads, in one-letter code: Putative toxin MJ0605 (134 aa).

It belongs to the UPF0332 family.

Its function is as follows. Putative toxin component of a putative type VII toxin-antitoxin (TA) system. Its cognate antitoxin might be MJ0604. The polypeptide is Putative toxin MJ0605 (Methanocaldococcus jannaschii (strain ATCC 43067 / DSM 2661 / JAL-1 / JCM 10045 / NBRC 100440) (Methanococcus jannaschii)).